The following is a 73-amino-acid chain: Aminopeptidase G (73 aa).

The disordered stretch occupies residues 39 to 73 (GRRAASSSWPGRGSSRRWRPGRRTGAAARGCWRAP). Composition is skewed to low complexity over residues 42-51 (AASSSWPGRG) and 61-73 (RTGA…WRAP).

This sequence belongs to the peptidase M1 family. Requires Zn(2+) as cofactor.

It localises to the cytoplasm. Functionally, hydrolyzes preferentially the N-terminal glycine and can also hydrolyze other amino acids which are used by PepN but is unable to hydrolyze basic amino acids. In Streptomyces lividans, this protein is Aminopeptidase G (pepG).